Consider the following 191-residue polypeptide: uncharacterized protein (191 aa).

This is an uncharacterized protein from Agrobacterium tumefaciens (strain Ach5).